The chain runs to 376 residues: Phosphatidylinositol/phosphatidylcholine transfer protein SFH11 (376 aa).

The segment covering 1-20 (MQETDRDIHISDGTMNKEEQ) has biased composition (basic and acidic residues). Residues 1-24 (MQETDRDIHISDGTMNKEEQSPNN) are disordered. The region spanning 92–266 (EYGEVKKHYP…FLGGNCTCSD (175 aa)) is the CRAL-TRIO domain. Residues 323 to 357 (MEKYAALKTAVKDSQKRIEMLEISLHETKKVLNGL) adopt a coiled-coil conformation.

Belongs to the SFH family.

The protein localises to the golgi apparatus membrane. Its subcellular location is the cell membrane. Functionally, required for transport of secretory proteins from the Golgi complex. Catalyzes the transfer of phosphatidylinositol and phosphatidylcholine between membranes in vitro. The sequence is that of Phosphatidylinositol/phosphatidylcholine transfer protein SFH11 (SFH11) from Arabidopsis thaliana (Mouse-ear cress).